We begin with the raw amino-acid sequence, 188 residues long: Adenine phosphoribosyltransferase (188 aa).

The protein belongs to the purine/pyrimidine phosphoribosyltransferase family. In terms of assembly, homodimer.

It localises to the cytoplasm. The enzyme catalyses AMP + diphosphate = 5-phospho-alpha-D-ribose 1-diphosphate + adenine. The protein operates within purine metabolism; AMP biosynthesis via salvage pathway; AMP from adenine: step 1/1. In terms of biological role, catalyzes a salvage reaction resulting in the formation of AMP, that is energically less costly than de novo synthesis. This chain is Adenine phosphoribosyltransferase, found in Burkholderia orbicola (strain MC0-3).